A 370-amino-acid polypeptide reads, in one-letter code: Vasopressin V2 receptor (370 aa).

Residues 1–28 (MLRATTSAVPRALSWPAAPGNGSEREPL) form a disordered region. Residues 1-37 (MLRATTSAVPRALSWPAAPGNGSEREPLDDRDPLLAR) lie on the Extracellular side of the membrane. An N-linked (GlcNAc...) asparagine glycan is attached at N21. A helical membrane pass occupies residues 38–62 (VELALLSTVFVAVALSNGLVLGALV). At 63 to 76 (RRGRRGRWAPMHVF) the chain is on the cytoplasmic side. The chain crosses the membrane as a helical span at residues 77–97 (IGHLCLADLAVALFQVLPQLA). Residues 98–112 (WDATYRFRGPDALCR) lie on the Extracellular side of the membrane. The helical transmembrane segment at 113-134 (AVKYLQMVGMYASSYMILAMTL) threads the bilayer. The Cytoplasmic portion of the chain corresponds to 135–158 (DRHRAICRPMLAYRHGGGARWNRP). The chain crosses the membrane as a helical span at residues 159-179 (VLVAWAFSLLLSLPQLFIFAQ). Topologically, residues 180–199 (RDVGDGSGVLDCWASFAEPW) are extracellular. Residues 200-219 (GLRAYVTWIALMVFVAPALG) traverse the membrane as a helical segment. The Cytoplasmic portion of the chain corresponds to 220–270 (IAACQVLIFREIHTSLVPGPAERAGGHRGGRRAGSPREGARVSAAMAKTAR). Residues 271–292 (MTLVIVAVYVLCWAPFFLVQLW) form a helical membrane-spanning segment. At 293 to 307 (SVWDPKAPREGPPFV) the chain is on the extracellular side. The helical transmembrane segment at 308–327 (LLMLLASLNSCTNPWIYASF) threads the bilayer. Residues 328-370 (SSSISSELRSLLCCPRRRTPPSLRPQEESCATASSFSARDTSS) are Cytoplasmic-facing. S-palmitoyl cysteine attachment occurs at residues C340 and C341. Residues 347 to 370 (PPSLRPQEESCATASSFSARDTSS) are disordered. Polar residues predominate over residues 356-370 (SCATASSFSARDTSS).

The protein belongs to the G-protein coupled receptor 1 family. Vasopressin/oxytocin receptor subfamily. As to quaternary structure, interacts with ARRDC4. Identified in a complex containing at least ARRDC4, V2R and HGS. Interacts with TMEM147.

The protein resides in the cell membrane. Receptor for arginine vasopressin. The activity of this receptor is mediated by G proteins which activate adenylate cyclase. Involved in renal water reabsorption. This chain is Vasopressin V2 receptor (AVPR2), found in Sus scrofa (Pig).